The sequence spans 262 residues: Glycoprotein gp2 (262 aa).

The disordered stretch occupies residues 1-45 (RRGSPQGGSHTTPHPDRLTPSPDDTYDDDTNHPNGRNNSIEIVPQ).

The protein localises to the virion membrane. Functionally, virulence factor. The sequence is that of Glycoprotein gp2 from Equus caballus (Horse).